A 244-amino-acid chain; its full sequence is Gasdermin-like protein rcd-1-2 (244 aa).

The segment at 1 to 22 (MDNEEWFPLKQTHYPPPTIPSM) is disordered.

Belongs to the gasdermin family. Heterooligomer; the heterooligomer with rcd-1-1 forms a ring-shaped pore complex when inserted in the membrane.

The protein localises to the cytoplasm. Its subcellular location is the cell membrane. Functionally, gasdermin-like protein involved in heterokaryon incompatibility, a process that ensures that during spontaneous vegetative cell fusion, only compatible cells from the same colony survive (non-self-recognition). In N.crassa, the rcd-1 locus exists as 2 incompatible alleles, rcd-1-1 (AC Q7SBA0) and rcd-1-2 (this entry). During the allorecognition process, forms a heterooligomer with rcd-1-1, thereby forming a functional gasdermin-like complex that binds to membranes and forms pores, triggering cell death. Binds negatively charged phospholipids, such as cardiolipin and phosphatidylserine. Also binds to phosphoinositides, preferentially to phosphatidylinositol-3-phosphate (PtdIns-3-P), PtdIns-5-P and PtdIns-3,5-P2. The sequence is that of Gasdermin-like protein rcd-1-2 from Neurospora crassa.